A 158-amino-acid polypeptide reads, in one-letter code: Cyclic pyranopterin monophosphate synthase (158 aa).

Substrate is bound by residues 74–76 and 112–113; these read MCH and ME. Residue aspartate 127 is part of the active site.

This sequence belongs to the MoaC family. Homohexamer; trimer of dimers.

The enzyme catalyses (8S)-3',8-cyclo-7,8-dihydroguanosine 5'-triphosphate = cyclic pyranopterin phosphate + diphosphate. It functions in the pathway cofactor biosynthesis; molybdopterin biosynthesis. In terms of biological role, catalyzes the conversion of (8S)-3',8-cyclo-7,8-dihydroguanosine 5'-triphosphate to cyclic pyranopterin monophosphate (cPMP). In Thermoanaerobacter sp. (strain X514), this protein is Cyclic pyranopterin monophosphate synthase.